The sequence spans 242 residues: Small ribosomal subunit protein uS2 (242 aa).

Belongs to the universal ribosomal protein uS2 family.

This is Small ribosomal subunit protein uS2 from Vibrio vulnificus (strain CMCP6).